The primary structure comprises 285 residues: Pantothenate synthetase (285 aa).

ATP is bound at residue 30–37 (MGNLHAGH). The Proton donor role is filled by His-37. Residue Gln-61 participates in (R)-pantoate binding. Residue Gln-61 coordinates beta-alanine. 149 to 152 (GEKD) lines the ATP pocket. Residue Gln-155 participates in (R)-pantoate binding. Position 186–189 (186–189 (LSSR)) interacts with ATP.

The protein belongs to the pantothenate synthetase family. Homodimer.

It localises to the cytoplasm. It carries out the reaction (R)-pantoate + beta-alanine + ATP = (R)-pantothenate + AMP + diphosphate + H(+). The protein operates within cofactor biosynthesis; (R)-pantothenate biosynthesis; (R)-pantothenate from (R)-pantoate and beta-alanine: step 1/1. Catalyzes the condensation of pantoate with beta-alanine in an ATP-dependent reaction via a pantoyl-adenylate intermediate. The polypeptide is Pantothenate synthetase (Ectopseudomonas mendocina (strain ymp) (Pseudomonas mendocina)).